A 1151-amino-acid chain; its full sequence is Nardilysin (1151 aa).

The first 20 residues, 1-20, serve as a signal peptide directing secretion; that stretch reads MLRRVTVAAVCATRRKLCEA. Disordered stretches follow at residues 53–108 and 133–207; these read RNKA…KSPS and MEGK…KKTT. Phosphoserine occurs at positions 86, 94, and 96. A compositionally biased stretch (acidic residues) spans 141 to 198; the sequence is TDDEEEEEVEEEEEDDDEDSGAEIEDDDEEGFDDEDEFDDEHDDDLDTEDNELEELEE. Zn(2+) is bound at residue histidine 233. Glutamate 236 functions as the Proton acceptor in the catalytic mechanism. Zn(2+) is bound by residues histidine 237 and glutamate 314.

Belongs to the peptidase M16 family. Interacts with BACE1 and NRG1. Zn(2+) is required as a cofactor. In terms of tissue distribution, primarily in adult heart, skeletal muscle, and testis and at much lower levels in other tissues.

The protein localises to the mitochondrion. The protein resides in the cell projection. Its subcellular location is the dendrite. The enzyme catalyses Hydrolysis of polypeptides, preferably at -Xaa-|-Arg-Lys-, and less commonly at -Arg-|-Arg-Xaa-, in which Xaa is not Arg or Lys.. Cleaves peptide substrates on the N-terminus of arginine residues in dibasic pairs. Is a critical activator of BACE1- and ADAM17-mediated pro-neuregulin ectodomain shedding, involved in the positive regulation of axonal maturation and myelination. Required for proper functioning of 2-oxoglutarate dehydrogenase (OGDH). The chain is Nardilysin from Homo sapiens (Human).